Here is an 848-residue protein sequence, read N- to C-terminus: Phosphatidate phosphatase LPIN3 (848 aa).

Residues 1–108 form an N-LIP region; sequence MNYVGQLAET…VPPRLCTSPI (108 aa). 3 disordered regions span residues 97-233, 271-298, and 314-373; these read EDVP…SPLR, PEEP…PGVR, and AVDS…NQHL. The short motif at 135–144 is the Nuclear localization signal element; sequence GRRKRRRRRK. The segment covering 135–146 has biased composition (basic residues); that stretch reads GRRKRRRRRKPR. The span at 151-164 shows a compositional bias: acidic residues; sequence DAVDSSSEELEAGA. Serine 155 and serine 156 each carry phosphoserine. Residues 165-191 are compositionally biased toward low complexity; sequence ESELTLLEKPTPESPSAQEAEEPSSQP. Position 218 is a phosphoserine (serine 218). The span at 271–282 shows a compositional bias: low complexity; sequence PEEPSPSSSPSE. Residues 342-358 show a composition bias toward polar residues; it reads KSWSWTTPESHTPSGHP. Phosphoserine is present on serine 460. A compositionally biased stretch (basic and acidic residues) spans 536–556; it reads EEHSSQREKAATRKQQGEKTE. The disordered stretch occupies residues 536 to 568; the sequence is EEHSSQREKAATRKQQGEKTEVLSSDDDVPDSP. The tract at residues 587 to 789 is C-LIP; that stretch reads YKKSLRLSSD…RIFTVNPRGE (203 aa). A DXDXT motif motif is present at residues 641–645; that stretch reads DIDGT. Residues 652-656 carry the LXXIL motif motif; the sequence is LGHIL.

This sequence belongs to the lipin family. Requires Mg(2+) as cofactor. In terms of tissue distribution, significant expression in intestine and other regions of the gastrointestinal tract.

The protein localises to the nucleus. The catalysed reaction is a 1,2-diacyl-sn-glycero-3-phosphate + H2O = a 1,2-diacyl-sn-glycerol + phosphate. Its activity is regulated as follows. Inhibited by N-ethylmaleimide. Magnesium-dependent phosphatidate phosphatase enzyme which catalyzes the conversion of phosphatidic acid to diacylglycerol during triglyceride, phosphatidylcholine and phosphatidylethanolamine biosynthesis therefore regulates fatty acid metabolism. This Mus musculus (Mouse) protein is Phosphatidate phosphatase LPIN3.